Here is a 274-residue protein sequence, read N- to C-terminus: Nitrogenase iron protein (274 aa).

Residue 8 to 15 (GKGGIGKS) participates in ATP binding. C94 contacts [4Fe-4S] cluster. Residue R97 is modified to ADP-ribosylarginine; by dinitrogenase reductase ADP-ribosyltransferase. Residue C131 participates in [4Fe-4S] cluster binding.

It belongs to the NifH/BchL/ChlL family. As to quaternary structure, homodimer. [4Fe-4S] cluster serves as cofactor. Post-translationally, the reversible ADP-ribosylation of Arg-97 inactivates the nitrogenase reductase and regulates nitrogenase activity.

The enzyme catalyses N2 + 8 reduced [2Fe-2S]-[ferredoxin] + 16 ATP + 16 H2O = H2 + 8 oxidized [2Fe-2S]-[ferredoxin] + 2 NH4(+) + 16 ADP + 16 phosphate + 6 H(+). The key enzymatic reactions in nitrogen fixation are catalyzed by the nitrogenase complex, which has 2 components: the iron protein and the molybdenum-iron protein. In Solidesulfovibrio magneticus (strain ATCC 700980 / DSM 13731 / RS-1) (Desulfovibrio magneticus), this protein is Nitrogenase iron protein.